A 95-amino-acid chain; its full sequence is Large ribosomal subunit protein eL42 (95 aa).

Zn(2+) contacts are provided by cysteine 11, cysteine 14, cysteine 71, and cysteine 74. A C4-type zinc finger spans residues 11–74 (CPRCNTHTEH…QVLVITCTVC (64 aa)).

It belongs to the eukaryotic ribosomal protein eL42 family. Part of the 50S ribosomal subunit. Zn(2+) serves as cofactor.

In terms of biological role, binds to the 23S rRNA. This is Large ribosomal subunit protein eL42 from Aeropyrum pernix (strain ATCC 700893 / DSM 11879 / JCM 9820 / NBRC 100138 / K1).